We begin with the raw amino-acid sequence, 513 residues long: ATP synthase subunit alpha (513 aa).

Gly-169–Thr-176 contributes to the ATP binding site.

It belongs to the ATPase alpha/beta chains family. F-type ATPases have 2 components, CF(1) - the catalytic core - and CF(0) - the membrane proton channel. CF(1) has five subunits: alpha(3), beta(3), gamma(1), delta(1), epsilon(1). CF(0) has three main subunits: a(1), b(2) and c(9-12). The alpha and beta chains form an alternating ring which encloses part of the gamma chain. CF(1) is attached to CF(0) by a central stalk formed by the gamma and epsilon chains, while a peripheral stalk is formed by the delta and b chains.

The protein localises to the cell inner membrane. The enzyme catalyses ATP + H2O + 4 H(+)(in) = ADP + phosphate + 5 H(+)(out). Its function is as follows. Produces ATP from ADP in the presence of a proton gradient across the membrane. The alpha chain is a regulatory subunit. The protein is ATP synthase subunit alpha of Shigella boydii serotype 18 (strain CDC 3083-94 / BS512).